Here is a 201-residue protein sequence, read N- to C-terminus: MSRYRGPRFKKIRRLGALPGLTSKRPKAGSDLRNQSRSGKKSQYRIRLEEKQKLRFHYGLTERQLLKYVRIAGKAKGSTGQVLLQLLEMRLDNILFRLGMALTIPQARQLVNHGHILVNGRIVDIPSYRCKPRDIITVKDEQNSRTLVQNLLDSSAPEELPNHLTLHTFQYEGLVNQIIDRKCVGLKINELLVVEYYSRQT.

Residues 20-44 (GLTSKRPKAGSDLRNQSRSGKKSQY) form a disordered region. One can recognise an S4 RNA-binding domain in the interval 89–152 (MRLDNILFRL…NSRTLVQNLL (64 aa)).

It belongs to the universal ribosomal protein uS4 family. In terms of assembly, part of the 30S ribosomal subunit. Contacts protein S5. The interaction surface between S4 and S5 is involved in control of translational fidelity.

Its subcellular location is the plastid. The protein localises to the chloroplast. Its function is as follows. One of the primary rRNA binding proteins, it binds directly to 16S rRNA where it nucleates assembly of the body of the 30S subunit. With S5 and S12 plays an important role in translational accuracy. This chain is Small ribosomal subunit protein uS4c (rps4), found in Barbarea verna (Land cress).